Reading from the N-terminus, the 957-residue chain is Dystrophin-related protein 2 (957 aa).

Spectrin repeat units lie at residues D102–E179 and E231–D337. The region spanning W358 to P383 is the WW domain. The ZZ-type; degenerate zinc-finger motif lies at K605–T661. C610, C613, C634, and C637 together coordinate Zn(2+). A Phosphoserine modification is found at S748. Residues P877–S894 are compositionally biased toward low complexity. The tract at residues P877–S923 is disordered. The residue at position 910 (T910) is a Phosphothreonine.

As to quaternary structure, interacts with PRX; this enhances phosphorylation. Identified in a dystroglycan complex that contains at least PRX, DRP2, UTRN, DMD and DAG1. In terms of tissue distribution, detected in trigeminal nerve Schwann cells. Detected in brain cortex and hippocampus. Detected in brain membrane fractions and highly enriched in the postsynaptic density (at protein level).

Its subcellular location is the postsynaptic density. It is found in the cell projection. The protein localises to the dendrite. The protein resides in the perikaryon. It localises to the cell membrane. Its function is as follows. Required for normal myelination and for normal organization of the cytoplasm and the formation of Cajal bands in myelinating Schwann cells. Required for normal PRX location at appositions between the abaxonal surface of the myelin sheath and the Schwann cell plasma membrane. Possibly involved in membrane-cytoskeleton interactions of the central nervous system. The sequence is that of Dystrophin-related protein 2 (Drp2) from Rattus norvegicus (Rat).